Here is a 205-residue protein sequence, read N- to C-terminus: uncharacterized protein (205 aa).

The first 40 residues, 1–40 (MSAGKSYRKKMKQRRMNMKISKYALGILMLSLVFVLSACG), serve as a signal peptide directing secretion. The tract at residues 44–82 (STKESTHDNHSDSSTHEEMDHSGSADVPEGLQESKNPKY) is disordered. A compositionally biased stretch (basic and acidic residues) spans 47-66 (ESTHDNHSDSSTHEEMDHSG).

This is an uncharacterized protein from Bacillus subtilis (strain 168).